The following is a 534-amino-acid chain: Bifunctional pantoate ligase/cytidylate kinase (534 aa).

The interval 1–302 (MRLLTTVAAL…LGSTRLIDNT (302 aa)) is pantoate--beta-alanine ligase. An ATP-binding site is contributed by 48 to 55 (MGSLHQGH). The Proton donor role is filled by H55. Residue Q79 participates in (R)-pantoate binding. Residue Q79 coordinates beta-alanine. 172 to 175 (GQKD) is an ATP binding site. Residue Q178 coordinates (R)-pantoate. Residues V201 and 209 to 212 (CSSR) each bind ATP. Positions 303-534 (ILRDRQPIIA…DYYQQRLSQW (232 aa)) are cytidylate kinase.

In the N-terminal section; belongs to the pantothenate synthetase family. It in the C-terminal section; belongs to the cytidylate kinase family. Type 1 subfamily.

It is found in the cytoplasm. The catalysed reaction is (R)-pantoate + beta-alanine + ATP = (R)-pantothenate + AMP + diphosphate + H(+). It carries out the reaction CMP + ATP = CDP + ADP. The enzyme catalyses dCMP + ATP = dCDP + ADP. The protein operates within cofactor biosynthesis; (R)-pantothenate biosynthesis; (R)-pantothenate from (R)-pantoate and beta-alanine: step 1/1. Catalyzes the condensation of pantoate with beta-alanine in an ATP-dependent reaction via a pantoyl-adenylate intermediate. Its function is as follows. Catalyzes the transfer of a phosphate group from ATP to either CMP or dCMP to form CDP or dCDP and ADP, respectively. This Trichormus variabilis (strain ATCC 29413 / PCC 7937) (Anabaena variabilis) protein is Bifunctional pantoate ligase/cytidylate kinase.